The chain runs to 126 residues: Protein ApaG (126 aa).

The ApaG domain maps to 2 to 126; the sequence is SALDDSIRVE…FRLALPGLLH (125 aa).

In Shewanella sp. (strain MR-4), this protein is Protein ApaG.